The primary structure comprises 799 residues: Elongation factor G, mitochondrial (799 aa).

Residues 1–24 (MRCPSLARLPHRAVSGLTRTPVRF) constitute a mitochondrion transit peptide. The region spanning 97 to 384 (SRVRNIGIAA…GVIDYLPNPS (288 aa)) is the tr-type G domain. GTP-binding positions include 106-113 (AHIDSGKT), 182-186 (DTPGH), and 236-239 (NKMD).

Belongs to the TRAFAC class translation factor GTPase superfamily. Classic translation factor GTPase family. EF-G/EF-2 subfamily.

Its subcellular location is the mitochondrion. Its pathway is protein biosynthesis; polypeptide chain elongation. Functionally, mitochondrial GTPase that catalyzes the GTP-dependent ribosomal translocation step during translation elongation. During this step, the ribosome changes from the pre-translocational (PRE) to the post-translocational (POST) state as the newly formed A-site-bound peptidyl-tRNA and P-site-bound deacylated tRNA move to the P and E sites, respectively. Catalyzes the coordinated movement of the two tRNA molecules, the mRNA and conformational changes in the ribosome. This chain is Elongation factor G, mitochondrial (mef1), found in Emericella nidulans (strain FGSC A4 / ATCC 38163 / CBS 112.46 / NRRL 194 / M139) (Aspergillus nidulans).